The primary structure comprises 310 residues: Tagatose-6-phosphate kinase (310 aa).

It belongs to the carbohydrate kinase PfkB family. LacC subfamily.

The enzyme catalyses D-tagatofuranose 6-phosphate + ATP = D-tagatofuranose 1,6-bisphosphate + ADP + H(+). It functions in the pathway carbohydrate metabolism; D-tagatose 6-phosphate degradation; D-glyceraldehyde 3-phosphate and glycerone phosphate from D-tagatose 6-phosphate: step 1/2. The sequence is that of Tagatose-6-phosphate kinase from Staphylococcus aureus (strain Mu3 / ATCC 700698).